The sequence spans 205 residues: Macrophage immunometabolism regulator (205 aa).

Residues 1–40 (MEVDINGVNRTNNSVPSTTEGSSPSKPDPEKPRCSSTPCS) are disordered. Residues 8–25 (VNRTNNSVPSTTEGSSPS) show a composition bias toward polar residues.

This sequence belongs to the UNC119-binding protein family. As to quaternary structure, interacts with unc119 family proteins; interaction preferentially takes place when unc119 proteins are unliganded with myristoylated proteins.

The protein resides in the cytoplasm. The protein localises to the cell projection. It is found in the cilium. May play a role in immune regulation through regulation of the macrophage function. May also play a role in trafficking of proteins via its interaction with unc119 family cargo adapters. May play a role in ciliary membrane localization. This is Macrophage immunometabolism regulator (macir) from Xenopus tropicalis (Western clawed frog).